Consider the following 941-residue polypeptide: Glycine dehydrogenase (decarboxylating) (941 aa).

N6-(pyridoxal phosphate)lysine is present on Lys692.

It belongs to the GcvP family. In terms of assembly, the glycine cleavage system is composed of four proteins: P, T, L and H. Requires pyridoxal 5'-phosphate as cofactor.

The catalysed reaction is N(6)-[(R)-lipoyl]-L-lysyl-[glycine-cleavage complex H protein] + glycine + H(+) = N(6)-[(R)-S(8)-aminomethyldihydrolipoyl]-L-lysyl-[glycine-cleavage complex H protein] + CO2. In terms of biological role, the glycine cleavage system catalyzes the degradation of glycine. The P protein binds the alpha-amino group of glycine through its pyridoxal phosphate cofactor; CO(2) is released and the remaining methylamine moiety is then transferred to the lipoamide cofactor of the H protein. The polypeptide is Glycine dehydrogenase (decarboxylating) (Mycobacterium avium (strain 104)).